The following is a 42-amino-acid chain: uncharacterized protein (42 aa).

A helical membrane pass occupies residues 15 to 37 (PLILAVDCAIIIPNTNFIHSFLI).

It is found in the membrane. This is an uncharacterized protein from Dictyostelium discoideum (Social amoeba).